The following is a 285-amino-acid chain: ATP synthase gamma chain (285 aa).

It belongs to the ATPase gamma chain family. As to quaternary structure, F-type ATPases have 2 components, CF(1) - the catalytic core - and CF(0) - the membrane proton channel. CF(1) has five subunits: alpha(3), beta(3), gamma(1), delta(1), epsilon(1). CF(0) has three main subunits: a, b and c.

It localises to the cell membrane. Its function is as follows. Produces ATP from ADP in the presence of a proton gradient across the membrane. The gamma chain is believed to be important in regulating ATPase activity and the flow of protons through the CF(0) complex. This Dehalococcoides mccartyi (strain ATCC BAA-2100 / JCM 16839 / KCTC 5957 / BAV1) protein is ATP synthase gamma chain.